A 30-amino-acid polypeptide reads, in one-letter code: Circulin A (30 aa).

The segment at residues 1 to 30 is a cross-link (cyclopeptide (Gly-Asn)); it reads GIPCGESCVWIPCISAALGCSCKNKVCYRN. Cystine bridges form between Cys4–Cys20, Cys8–Cys22, and Cys13–Cys27.

This is a cyclic peptide. Expressed in fruit, pedicel, root and stem but not in leaf (at protein level).

Probably participates in a plant defense mechanism. The polypeptide is Circulin A (Chassalia chartacea (Chassalia curviflora)).